The primary structure comprises 224 residues: Putative endoglucanase X (224 aa).

Residues 147 to 168 (QTQPTPSPSPTPTDSPLVKKGD) are disordered. The region spanning 162–224 (PLVKKGDVNL…SILKRILLRN (63 aa)) is the Dockerin domain.

The enzyme catalyses Endohydrolysis of (1-&gt;4)-beta-D-glucosidic linkages in cellulose, lichenin and cereal beta-D-glucans.. This enzyme catalyzes the endohydrolysis of 1,4-beta-glucosidic linkages in cellulose, lichenin and cereal beta-D-glucans. This is Putative endoglucanase X (celX) from Acetivibrio thermocellus (Hungateiclostridium thermocellum).